Reading from the N-terminus, the 154-residue chain is MIIKNLQEFYRLLIPNVPLIAIDYGNKKLGIALSNQERSIAMPLNTITEINKKIVITSLLNIIEKYKVCGVIIGLPIDMSGAVTEQTNIVMKFAEELAKSINLPIYLQDERLTTKAANNLLKSFGVKRKDRNNNDDAVAASMILETVLDSIKNI.

Belongs to the YqgF nuclease family.

The protein localises to the cytoplasm. Its function is as follows. Could be a nuclease involved in processing of the 5'-end of pre-16S rRNA. This is Putative pre-16S rRNA nuclease from Rickettsia conorii (strain ATCC VR-613 / Malish 7).